We begin with the raw amino-acid sequence, 124 residues long: Large ribosomal subunit protein bL21 (124 aa).

This sequence belongs to the bacterial ribosomal protein bL21 family. As to quaternary structure, part of the 50S ribosomal subunit. Contacts protein L20.

In terms of biological role, this protein binds to 23S rRNA in the presence of protein L20. This is Large ribosomal subunit protein bL21 from Synechocystis sp. (strain ATCC 27184 / PCC 6803 / Kazusa).